A 213-amino-acid chain; its full sequence is 3,4-dihydroxy-2-butanone 4-phosphate synthase (213 aa).

D-ribulose 5-phosphate contacts are provided by residues 37–38 (RE), Asp42, 150–154 (RPGHT), and Glu174. Glu38 lines the Mg(2+) pocket. His153 lines the Mg(2+) pocket.

Belongs to the DHBP synthase family. In terms of assembly, homodimer. Requires Mg(2+) as cofactor. Mn(2+) is required as a cofactor.

It catalyses the reaction D-ribulose 5-phosphate = (2S)-2-hydroxy-3-oxobutyl phosphate + formate + H(+). It participates in cofactor biosynthesis; riboflavin biosynthesis; 2-hydroxy-3-oxobutyl phosphate from D-ribulose 5-phosphate: step 1/1. In terms of biological role, catalyzes the conversion of D-ribulose 5-phosphate to formate and 3,4-dihydroxy-2-butanone 4-phosphate. The protein is 3,4-dihydroxy-2-butanone 4-phosphate synthase of Clostridium botulinum (strain Langeland / NCTC 10281 / Type F).